A 148-amino-acid chain; its full sequence is Hydrogenase expression/formation protein HoxO (148 aa).

The interval 128-148 (IPVLSPESGTPSCSPMETSES) is disordered. Positions 134–148 (ESGTPSCSPMETSES) are enriched in polar residues.

Belongs to the HupG/HyaE family.

This chain is Hydrogenase expression/formation protein HoxO (hoxO), found in Azotobacter vinelandii.